The chain runs to 460 residues: ATP synthase subunit beta (460 aa).

ATP is bound at residue 150-157; the sequence is GGAGVGKT.

This sequence belongs to the ATPase alpha/beta chains family. F-type ATPases have 2 components, CF(1) - the catalytic core - and CF(0) - the membrane proton channel. CF(1) has five subunits: alpha(3), beta(3), gamma(1), delta(1), epsilon(1). CF(0) has three main subunits: a(1), b(2) and c(9-12). The alpha and beta chains form an alternating ring which encloses part of the gamma chain. CF(1) is attached to CF(0) by a central stalk formed by the gamma and epsilon chains, while a peripheral stalk is formed by the delta and b chains.

Its subcellular location is the cell inner membrane. The catalysed reaction is ATP + H2O + 4 H(+)(in) = ADP + phosphate + 5 H(+)(out). In terms of biological role, produces ATP from ADP in the presence of a proton gradient across the membrane. The catalytic sites are hosted primarily by the beta subunits. This is ATP synthase subunit beta from Serratia proteamaculans (strain 568).